Consider the following 332-residue polypeptide: MSTVKEQLIQNLVPEDKLSRCKITVVGVGNVGMACAISILLKGLADELALVDADTNKLRGEALDLLHGSLFLSTPKIVFGKDYNVSANSKLVIITAGARMVSGETRLDLLQRNVAIMKAIVPGIVQNSPDCKIIIVTNPVDILTYVVWKISGFPVGRVIGSGCNLDSARFRYLIGEKLGVNPTSCHGWVLGEHGDSSVPIWSGVNVAGVTLKSLNPAIGTDSDKEHWKNVHKQVVEGGYEVLNMKGYTSWAIGLSVTDLARSILKNLKRVHPVTTLVKGFHGIKEEVFLSIPCVLGQSGITDFVKVNMTAEEEGLLKKSADTLWNMQKDLQL.

Position 2 is a blocked amino end (Ser) (serine 2). NAD(+)-binding positions include 29 to 57 (GNVG…DTNK) and arginine 99. Substrate is bound by residues arginine 106, asparagine 138, and arginine 169. Asparagine 138 lines the NAD(+) pocket. The Proton acceptor role is filled by histidine 193. Threonine 248 serves as a coordination point for substrate.

The protein belongs to the LDH/MDH superfamily. LDH family. As to quaternary structure, homotetramer. Interacts with RABL2/RABL2A; binds preferentially to GTP-bound RABL2. As to expression, expressed within the midpiece of sperm tail (at protein level).

It localises to the cytoplasm. It catalyses the reaction (S)-lactate + NAD(+) = pyruvate + NADH + H(+). The protein operates within fermentation; pyruvate fermentation to lactate; (S)-lactate from pyruvate: step 1/1. Functionally, possible role in sperm motility. This chain is L-lactate dehydrogenase C chain (Ldhc), found in Mus musculus (Mouse).